A 62-amino-acid chain; its full sequence is Photosystem II reaction center protein K (62 aa).

A propeptide spanning residues 1-25 (MPNILSLTCICFNSVLYPTTSFFFA) is cleaved from the precursor. The helical transmembrane segment at 33 to 53 (IFNPIVDVMPVIPLFFFLLAF) threads the bilayer.

The protein belongs to the PsbK family. PSII is composed of 1 copy each of membrane proteins PsbA, PsbB, PsbC, PsbD, PsbE, PsbF, PsbH, PsbI, PsbJ, PsbK, PsbL, PsbM, PsbT, PsbX, PsbY, PsbZ, Psb30/Ycf12, at least 3 peripheral proteins of the oxygen-evolving complex and a large number of cofactors. It forms dimeric complexes.

It is found in the plastid. It localises to the chloroplast thylakoid membrane. One of the components of the core complex of photosystem II (PSII). PSII is a light-driven water:plastoquinone oxidoreductase that uses light energy to abstract electrons from H(2)O, generating O(2) and a proton gradient subsequently used for ATP formation. It consists of a core antenna complex that captures photons, and an electron transfer chain that converts photonic excitation into a charge separation. This is Photosystem II reaction center protein K from Agrostis stolonifera (Creeping bentgrass).